Reading from the N-terminus, the 315-residue chain is Calumenin (315 aa).

Positions 1–19 (MDLRQFLMCLSLCTAFALS) are cleaved as a signal peptide. Phosphoserine is present on Ser-44. The residue at position 47 (Tyr-47) is a Phosphotyrosine. Thr-65 carries the post-translational modification Phosphothreonine. EF-hand domains follow at residues 68 to 103 (ESKERLGKIVSKIDDDKDGFVTVDELKDWIKFAQKR), 104 to 139 (WIYEDVERQWKGHDLNEDGLVSWEEYKNATYGYVLD), 151 to 186 (QMMVRDERRFKMADKDGDLIATKEEFTAFLHPEEYD), 188 to 223 (MKDIVVQETMEDIDKNADGFIDLEEYIGDMYSHDGN), 229 to 264 (WVKTEREQFVEFRDKNRDGKMDKEETKDWILPSDYD), and 265 to 300 (HAEAEARHLVYESDQNKDGKLTKEEIVDKYDLFVGS). Ser-69 carries the phosphoserine modification. Residues Asp-81, Asp-83, Asp-85, Glu-92, Asp-117, Asn-119, Asp-121, and Glu-128 each coordinate Ca(2+). Asn-131 carries an N-linked (GlcNAc...) asparagine glycan. Asp-164 is a Ca(2+) binding site. Lys-165 is modified (N6-acetyllysine). Positions 166, 168, 175, 201, 203, 205, 212, 242, 244, 246, 248, and 253 each coordinate Ca(2+). Thr-254 bears the Phosphothreonine mark. Phosphoserine occurs at positions 261 and 277. Asp-278, Asn-280, Asp-282, Lys-284, and Glu-289 together coordinate Ca(2+). The Prevents secretion from ER motif lies at 312 to 315 (HDEF).

Belongs to the CREC family. As to quaternary structure, interacts with GGCX.

The protein resides in the endoplasmic reticulum membrane. It localises to the golgi apparatus. It is found in the secreted. The protein localises to the melanosome. Its subcellular location is the sarcoplasmic reticulum lumen. Its function is as follows. Involved in regulation of vitamin K-dependent carboxylation of multiple N-terminal glutamate residues. Seems to inhibit gamma-carboxylase GGCX. Binds 7 calcium ions with a low affinity. The polypeptide is Calumenin (CALU) (Pongo abelii (Sumatran orangutan)).